The chain runs to 85 residues: Large ribosomal subunit protein bL31B (85 aa).

This sequence belongs to the bacterial ribosomal protein bL31 family. Type B subfamily. In terms of assembly, part of the 50S ribosomal subunit.

This Pseudomonas entomophila (strain L48) protein is Large ribosomal subunit protein bL31B.